The primary structure comprises 370 residues: 3-dehydroquinate synthase (370 aa).

NAD(+) is bound by residues 112–116, 136–137, lysine 149, lysine 158, and 176–179; these read GVIGD, TT, and TLAT. 3 residues coordinate Zn(2+): glutamate 191, histidine 254, and histidine 276.

It belongs to the sugar phosphate cyclases superfamily. Dehydroquinate synthase family. It depends on Co(2+) as a cofactor. Zn(2+) serves as cofactor. The cofactor is NAD(+).

Its subcellular location is the cytoplasm. It carries out the reaction 7-phospho-2-dehydro-3-deoxy-D-arabino-heptonate = 3-dehydroquinate + phosphate. The protein operates within metabolic intermediate biosynthesis; chorismate biosynthesis; chorismate from D-erythrose 4-phosphate and phosphoenolpyruvate: step 2/7. Its function is as follows. Catalyzes the conversion of 3-deoxy-D-arabino-heptulosonate 7-phosphate (DAHP) to dehydroquinate (DHQ). The polypeptide is 3-dehydroquinate synthase (Xylella fastidiosa (strain M23)).